The sequence spans 189 residues: UPF0316 protein Sca_1484 (189 aa).

A run of 3 helical transmembrane segments spans residues 8–28 (PWLM…CLTV), 40–60 (VAAA…GLVM), and 66–86 (FQNI…GMKI).

It belongs to the UPF0316 family.

It localises to the cell membrane. This is UPF0316 protein Sca_1484 from Staphylococcus carnosus (strain TM300).